A 62-amino-acid polypeptide reads, in one-letter code: DNA-directed RNA polymerase subunit Rpo10 (62 aa).

Cys6, Cys9, Cys43, and Cys44 together coordinate Zn(2+).

The protein belongs to the archaeal Rpo10/eukaryotic RPB10 RNA polymerase subunit family. Part of the RNA polymerase complex. Requires Zn(2+) as cofactor.

Its subcellular location is the cytoplasm. It catalyses the reaction RNA(n) + a ribonucleoside 5'-triphosphate = RNA(n+1) + diphosphate. In terms of biological role, DNA-dependent RNA polymerase (RNAP) catalyzes the transcription of DNA into RNA using the four ribonucleoside triphosphates as substrates. This is DNA-directed RNA polymerase subunit Rpo10 from Methanosarcina mazei (strain ATCC BAA-159 / DSM 3647 / Goe1 / Go1 / JCM 11833 / OCM 88) (Methanosarcina frisia).